A 650-amino-acid polypeptide reads, in one-letter code: Acetyl-coenzyme A synthetase (650 aa).

CoA-binding positions include 191–194 (RGGR), threonine 311, and asparagine 335. Residues 387-389 (GEP), 411-416 (DTWWQT), aspartate 501, and arginine 516 contribute to the ATP site. A CoA-binding site is contributed by serine 524. Residue arginine 527 participates in ATP binding. Positions 538, 540, and 543 each coordinate Mg(2+). Arginine 585 contacts CoA. Lysine 610 is subject to N6-acetyllysine.

Belongs to the ATP-dependent AMP-binding enzyme family. It depends on Mg(2+) as a cofactor. In terms of processing, acetylated. Deacetylation by the SIR2-homolog deacetylase activates the enzyme.

The catalysed reaction is acetate + ATP + CoA = acetyl-CoA + AMP + diphosphate. Catalyzes the conversion of acetate into acetyl-CoA (AcCoA), an essential intermediate at the junction of anabolic and catabolic pathways. AcsA undergoes a two-step reaction. In the first half reaction, AcsA combines acetate with ATP to form acetyl-adenylate (AcAMP) intermediate. In the second half reaction, it can then transfer the acetyl group from AcAMP to the sulfhydryl group of CoA, forming the product AcCoA. The protein is Acetyl-coenzyme A synthetase of Vibrio vulnificus (strain CMCP6).